Here is a 625-residue protein sequence, read N- to C-terminus: Chaperone protein DnaK (625 aa).

Thr197 bears the Phosphothreonine; by autocatalysis mark. The interval Ala598 to Glu625 is disordered.

It belongs to the heat shock protein 70 family.

Acts as a chaperone. This is Chaperone protein DnaK from Helicobacter hepaticus (strain ATCC 51449 / 3B1).